The sequence spans 219 residues: Outer spore wall protein 4 (219 aa).

Positions 1-19 (MRFQLFIYFYFTIVVIAGT) are cleaved as a signal peptide. At 20 to 170 (NTIQQFSDAG…KKKRLDRIKR (151 aa)) the chain is on the extracellular side. Residues N42, N62, and N136 are each glycosylated (N-linked (GlcNAc...) asparagine). A helical transmembrane segment spans residues 171 to 191 (ILTVSLLELGLAQGVADLCAV). The Cytoplasmic segment spans residues 192 to 193 (AP). A helical transmembrane segment spans residues 194-214 (FACLLGVTVGSIGFIFWLALI). At 215 to 219 (YNAIQ) the chain is on the extracellular side.

Belongs to the OSW4/6 family. In terms of processing, N-glycosylated.

Its subcellular location is the membrane. Its function is as follows. Involved in spore wall assembly. May be involved in maintaining genome integrity. In Saccharomyces cerevisiae (strain ATCC 204508 / S288c) (Baker's yeast), this protein is Outer spore wall protein 4.